We begin with the raw amino-acid sequence, 400 residues long: MIIKPRIRGFICTTTHPVGCEANVKEQIAYTKAQGPIKNAPKRVLVVGASSGYGLSSRIAAAFGGGASTIGVFFEKEGTEKKPGTAGFYNAAAFEKLAREEGLYAKSLNGDAFSNEAKQKTIDLIKEDLGQVDMVVYSLASPVRKMPETGELIRSALKPIGETYTSTAVDTNKDVIIEASVEPATEEEIKDTVTVMGGEDWELWINALSDAGVLAEGCKTVAYSYIGTELTWPIYWDGALGKAKMDLDRAAKALNEKLGATGGSANVAVLKSVVTQASSAIPVMPLYIAMVFKKMREEGVHEGCMEQIYRMFSQRLYKEDGSAAEVDDMNRLRLDDWELREDIQQHCRELWPQITTENLKELTDYVEYKEEFLKLFGFGVEGVDYEADVNPAVETDFIQI.

NAD(+) is bound by residues 48-53 (GASSGY), 74-75 (FE), 111-112 (DA), and 139-140 (LA). Tyrosine 225 serves as a coordination point for substrate. Tyrosine 235 functions as the Proton donor in the catalytic mechanism. NAD(+) is bound by residues lysine 244 and 273-275 (VVT).

The protein belongs to the TER reductase family. Monomer.

It carries out the reaction a 2,3-saturated acyl-[ACP] + NAD(+) = a (2E)-enoyl-[ACP] + NADH + H(+). It participates in lipid metabolism; fatty acid biosynthesis. In terms of biological role, involved in the final reduction of the elongation cycle of fatty acid synthesis (FAS II). Catalyzes the reduction of a carbon-carbon double bond in an enoyl moiety that is covalently linked to an acyl carrier protein (ACP). The chain is Enoyl-[acyl-carrier-protein] reductase [NADH] 1 from Vibrio parahaemolyticus serotype O3:K6 (strain RIMD 2210633).